Consider the following 416-residue polypeptide: N-acetylmuramoyl-L-alanine amidase AmiC (416 aa).

A signal peptide spans 1 to 26; the sequence is MIKLTRRQIIRRTAGTLFALSPIASA. A disordered region spans residues 166–191; sequence RGSPEADLAQNTTPQPGRGRNGRRPV. Positions 192 to 405 constitute a MurNAc-LAA domain; the sequence is IMLDPGHGGE…CAQSIASGVQ (214 aa).

Belongs to the N-acetylmuramoyl-L-alanine amidase 3 family.

Its subcellular location is the periplasm. It carries out the reaction Hydrolyzes the link between N-acetylmuramoyl residues and L-amino acid residues in certain cell-wall glycopeptides.. Its function is as follows. Cell-wall hydrolase involved in septum cleavage during cell division. This Neisseria meningitidis serogroup B (strain ATCC BAA-335 / MC58) protein is N-acetylmuramoyl-L-alanine amidase AmiC (amiC).